Here is a 404-residue protein sequence, read N- to C-terminus: Rhomboid-related protein 3 (404 aa).

EF-hand domains are found at residues 34-69 (APED…HSSK) and 70-105 (LDPH…KRSN). The next 7 membrane-spanning stretches (helical) occupy residues 164–184 (WFMI…GVSL), 218–238 (IFMH…LLVG), 250–270 (IGLV…VADM), 274–294 (VVGS…NIVM), 303–325 (FKLL…AVWL), 338–358 (PSFV…VVVL), and 371–391 (WWIF…WNIF). Serine 278 acts as the Nucleophile in catalysis. The active site involves histidine 343.

This sequence belongs to the peptidase S54 family.

It is found in the membrane. The enzyme catalyses Cleaves type-1 transmembrane domains using a catalytic dyad composed of serine and histidine that are contributed by different transmembrane domains.. In terms of biological role, may be involved in regulated intramembrane proteolysis and the subsequent release of functional polypeptides from their membrane anchors. The sequence is that of Rhomboid-related protein 3 (RHBDL3) from Homo sapiens (Human).